The chain runs to 186 residues: uncharacterized protein (186 aa).

This is an uncharacterized protein from Haemophilus influenzae (strain ATCC 51907 / DSM 11121 / KW20 / Rd).